The chain runs to 431 residues: Adenylosuccinate synthetase (431 aa).

Residues Gly-13–Lys-19 and Gly-41–Thr-43 contribute to the GTP site. Catalysis depends on Asp-14, which acts as the Proton acceptor. Positions 14 and 41 each coordinate Mg(2+). Residues Asp-14 to Lys-17, Asn-39 to His-42, Thr-130, Arg-144, Gln-225, Thr-240, and Arg-304 contribute to the IMP site. The Proton donor role is filled by His-42. Residue Ala-300–Arg-306 coordinates substrate. GTP contacts are provided by residues Arg-306, Lys-332–Asp-334, and Ser-414–Gly-416.

It belongs to the adenylosuccinate synthetase family. In terms of assembly, homodimer. Mg(2+) is required as a cofactor.

It localises to the cytoplasm. It catalyses the reaction IMP + L-aspartate + GTP = N(6)-(1,2-dicarboxyethyl)-AMP + GDP + phosphate + 2 H(+). Its pathway is purine metabolism; AMP biosynthesis via de novo pathway; AMP from IMP: step 1/2. Its function is as follows. Plays an important role in the de novo pathway of purine nucleotide biosynthesis. Catalyzes the first committed step in the biosynthesis of AMP from IMP. This chain is Adenylosuccinate synthetase, found in Nitrosococcus oceani (strain ATCC 19707 / BCRC 17464 / JCM 30415 / NCIMB 11848 / C-107).